The following is a 252-amino-acid chain: MADLNVGVVVFPGSNCDHDTEYAVASFSGVKPVMLWHNEHDLKGCDAIILPGGFSYGDYLRCGSIARFSPIMREVIDFAGQGRPVLGICNGFQVLVESGLLEGALIRNAGRKFICRQSTISVVNNSTIFTDRYEKGEVLRVPVAHGEGNYYASVETIDSLESNGQVVFRYTDAEGNATAEANFNGSLNNIAGITNKQGNVLGLMPHPERASEELLGSGDGRRVFESLFAHLAGTKRSSRGCCSTSPTRRSAS.

One can recognise a Glutamine amidotransferase type-1 domain in the interval 6–237 (VGVVVFPGSN…FAHLAGTKRS (232 aa)). The active-site Nucleophile is cysteine 89. Catalysis depends on residues histidine 206 and glutamate 208.

In terms of assembly, part of the FGAM synthase complex composed of 1 PurL, 1 PurQ and 2 PurS subunits.

It is found in the cytoplasm. It catalyses the reaction N(2)-formyl-N(1)-(5-phospho-beta-D-ribosyl)glycinamide + L-glutamine + ATP + H2O = 2-formamido-N(1)-(5-O-phospho-beta-D-ribosyl)acetamidine + L-glutamate + ADP + phosphate + H(+). The catalysed reaction is L-glutamine + H2O = L-glutamate + NH4(+). The protein operates within purine metabolism; IMP biosynthesis via de novo pathway; 5-amino-1-(5-phospho-D-ribosyl)imidazole from N(2)-formyl-N(1)-(5-phospho-D-ribosyl)glycinamide: step 1/2. Its function is as follows. Part of the phosphoribosylformylglycinamidine synthase complex involved in the purines biosynthetic pathway. Catalyzes the ATP-dependent conversion of formylglycinamide ribonucleotide (FGAR) and glutamine to yield formylglycinamidine ribonucleotide (FGAM) and glutamate. The FGAM synthase complex is composed of three subunits. PurQ produces an ammonia molecule by converting glutamine to glutamate. PurL transfers the ammonia molecule to FGAR to form FGAM in an ATP-dependent manner. PurS interacts with PurQ and PurL and is thought to assist in the transfer of the ammonia molecule from PurQ to PurL. The sequence is that of Phosphoribosylformylglycinamidine synthase subunit PurQ from Chlorobaculum parvum (strain DSM 263 / NCIMB 8327) (Chlorobium vibrioforme subsp. thiosulfatophilum).